Here is a 146-residue protein sequence, read N- to C-terminus: Peptide methionine sulfoxide reductase MsrB (146 aa).

The region spanning 2 to 125 (LKKNKDELND…NSAAVQFIPY (124 aa)) is the MsrB domain. Cys114 serves as the catalytic Nucleophile.

It belongs to the MsrB Met sulfoxide reductase family.

It catalyses the reaction L-methionyl-[protein] + [thioredoxin]-disulfide + H2O = L-methionyl-(R)-S-oxide-[protein] + [thioredoxin]-dithiol. This Staphylococcus carnosus (strain TM300) protein is Peptide methionine sulfoxide reductase MsrB.